Consider the following 247-residue polypeptide: MNVIPCSIKTLKGLYDISGVEVGQHLYWQIGGLQIHAQVLITSWVVIAILLGSVIIAVRNPQTIPTNGQNFFEYVLEFIQDLSKTQIGEEYGPWVPFIGTMFLFIFVSNWSGALLPWKIIKLPHGELAAPTNDINTTVALALPTSVAYFYAGLRKKGLGYFGKYIQPTPILLPINILEDFTKPLSLSFRLFGNILADELVVVVLVSLVPSVVPIPVMFLGLFTSGIQALIFATLAAAYIGESMEGHH.

A run of 5 helical transmembrane segments spans residues 38–58 (QVLI…IIAV), 95–115 (VPFI…GALL), 133–153 (DINT…YAGL), 199–219 (LVVV…VMFL), and 220–240 (GLFT…AYIG).

It belongs to the ATPase A chain family. In terms of assembly, F-type ATPases have 2 components, CF(1) - the catalytic core - and CF(0) - the membrane proton channel. CF(1) has five subunits: alpha(3), beta(3), gamma(1), delta(1), epsilon(1). CF(0) has four main subunits: a, b, b' and c.

The protein localises to the plastid. It is found in the chloroplast thylakoid membrane. Its function is as follows. Key component of the proton channel; it plays a direct role in the translocation of protons across the membrane. This is ATP synthase subunit a, chloroplastic from Phalaenopsis aphrodite subsp. formosana (Moth orchid).